Here is a 328-residue protein sequence, read N- to C-terminus: dTDP-4-dehydrorhamnose 3,5-epimerase (328 aa).

Residues arginine 23, glutamate 28, 46–48, and arginine 58 each bind substrate; that span reads QEN. The Proton acceptor role is filled by histidine 61. Substrate-binding residues include lysine 70 and histidine 117. Catalysis depends on tyrosine 130, which acts as the Proton donor. Substrate is bound by residues glutamate 141 and lysine 166.

The protein belongs to the dTDP-4-dehydrorhamnose 3,5-epimerase family. In terms of assembly, homodimer.

It carries out the reaction dTDP-4-dehydro-6-deoxy-alpha-D-glucose = dTDP-4-dehydro-beta-L-rhamnose. The protein operates within carbohydrate biosynthesis; dTDP-L-rhamnose biosynthesis. It functions in the pathway bacterial outer membrane biogenesis; LPS O-antigen biosynthesis. Its function is as follows. Catalyzes the epimerization of the C3' and C5'positions of dTDP-6-deoxy-D-xylo-4-hexulose, forming dTDP-6-deoxy-L-lyxo-4-hexulose. This chain is dTDP-4-dehydrorhamnose 3,5-epimerase (rfbC), found in Neisseria gonorrhoeae.